The following is a 549-amino-acid chain: Cation/acetate symporter ActP (549 aa).

The next 13 helical transmembrane spans lie at 33 to 53, 77 to 97, 103 to 123, 148 to 168, 183 to 203, 206 to 226, 262 to 282, 303 to 323, 355 to 375, 404 to 424, 428 to 448, 464 to 484, and 493 to 513; these read WQAI…TYWA, LAIA…ALVF, GLIY…LIAE, ILSA…QMVG, IAVV…GMLA, WVQI…AFMV, ISAL…PHIL, GFMG…IMLV, LFLG…VAGL, VSKI…VLFE, IAFM…PIIL, GGWL…TIWV, and IFPY…GIWF.

It belongs to the sodium:solute symporter (SSF) (TC 2.A.21) family.

The protein localises to the cell inner membrane. In terms of biological role, transports acetate. The polypeptide is Cation/acetate symporter ActP (Escherichia coli O17:K52:H18 (strain UMN026 / ExPEC)).